The following is a 219-amino-acid chain: ATP-dependent Clp protease proteolytic subunit (219 aa).

The segment at 1–22 is disordered; the sequence is MPVGVPKVPFLNPNPDPEPDSV. The active-site Nucleophile is S116. Residue H141 is part of the active site.

The protein belongs to the peptidase S14 family. In terms of assembly, component of the chloroplastic Clp protease core complex.

It is found in the plastid. The protein resides in the chloroplast stroma. The catalysed reaction is Hydrolysis of proteins to small peptides in the presence of ATP and magnesium. alpha-casein is the usual test substrate. In the absence of ATP, only oligopeptides shorter than five residues are hydrolyzed (such as succinyl-Leu-Tyr-|-NHMec, and Leu-Tyr-Leu-|-Tyr-Trp, in which cleavage of the -Tyr-|-Leu- and -Tyr-|-Trp bonds also occurs).. Functionally, cleaves peptides in various proteins in a process that requires ATP hydrolysis. Has a chymotrypsin-like activity. Plays a major role in the degradation of misfolded proteins. The protein is ATP-dependent Clp protease proteolytic subunit of Pelargonium hortorum (Common geranium).